We begin with the raw amino-acid sequence, 1896 residues long: Trinucleotide repeat-containing gene 6A protein (1896 aa).

Composition is skewed to basic and acidic residues over residues Met-1–Val-21 and Lys-39–Glu-57. Disordered regions lie at residues Met-1 to Arg-137, Ser-159 to Thr-209, Glu-222 to Glu-250, and Ala-257 to Ser-276. The tract at residues Met-1 to Leu-917 is interaction with argonaute family proteins. Low complexity-rich tracts occupy residues Ala-69 to Gln-93 and Gln-101 to Gln-113. Residues Arg-125–Arg-137 show a composition bias toward basic residues. The interval Ile-239–Ser-488 is sufficient for interaction with AGO1, AGO3 and AGO4. Sufficient for interaction with AGO2 regions lie at residues Val-255–Gly-331, Gly-303–Gly-384, Asn-325–Phe-424, Ser-394–Ala-480, and Thr-487–Glu-736. 2 stretches are compositionally biased toward polar residues: residues Val-396–Glu-410 and Ser-417–Gln-429. Disordered stretches follow at residues Val-396 to Pro-461, Phe-548 to Ile-683, Leu-703 to Lys-998, Ile-1011 to Trp-1126, and Gln-1143 to Glu-1182. Over residues Asn-430–Asn-443 the composition is skewed to low complexity. Positions Phe-444 to Pro-461 are enriched in polar residues. The interval Asn-551 to Gln-1279 is sufficient for interaction with AGO1 and AGO4. Gly residues predominate over residues Ser-573–Arg-584. 2 stretches are compositionally biased toward polar residues: residues Gln-591 to Gly-617 and Gly-635 to Val-647. Positions Gly-665–Ile-683 are enriched in basic and acidic residues. A compositionally biased stretch (polar residues) spans Leu-703 to Glu-722. The segment covering Thr-723–Asn-733 has biased composition (basic and acidic residues). Ser-724 is modified (phosphoserine). The segment covering Trp-738 to Ser-766 has biased composition (polar residues). A compositionally biased stretch (low complexity) spans Ser-858–Gly-871. Residue Ser-863 is modified to Phosphoserine. Composition is skewed to polar residues over residues Gly-876–Gly-906 and Lys-924–Ile-937. Ser-976 is modified (phosphoserine). Composition is skewed to polar residues over residues Ala-1033–Gly-1042, Thr-1054–Ser-1064, and Ala-1082–Lys-1105. The segment at Val-1059–Glu-1129 is sufficient for interaction with AGO2. Low complexity predominate over residues Gln-1143–Leu-1163. Phosphoserine occurs at positions 1197 and 1255. 3 disordered regions span residues Gly-1234 to Met-1256, Val-1273 to Leu-1306, and Gln-1360 to Gln-1395. Low complexity-rich tracts occupy residues Gln-1284–Pro-1296 and Gln-1360–Gln-1376. Phosphothreonine is present on Thr-1406. Disordered stretches follow at residues Met-1512–Gly-1570 and Pro-1659–Ser-1685. Position 1520 is a phosphoserine (Ser-1520). The sufficient for interaction with AGO2 stretch occupies residues Thr-1605–Met-1896. Positions Asn-1716–Glu-1788 constitute an RRM domain. 2 positions are modified to phosphoserine: Ser-1804 and Ser-1825.

Belongs to the GW182 family. As to quaternary structure, interacts with AGO2. Interacts with AGO1, AGO3 and AGO4. Interacts with CNOT1; the interaction is direct and mediates the association with the CCR4-NOT complex. Interacts with ZC3H12A. Interacts with SND1. Interacts with GARRE1.

The protein localises to the cytoplasm. It is found in the P-body. Plays a role in RNA-mediated gene silencing by both micro-RNAs (miRNAs) and short interfering RNAs (siRNAs). Required for miRNA-dependent repression of translation and for siRNA-dependent endonucleolytic cleavage of complementary mRNAs by argonaute family proteins. As a scaffolding protein, associates with argonaute proteins bound to partially complementary mRNAs, and can simultaneously recruit CCR4-NOT and PAN deadenylase complexes. The sequence is that of Trinucleotide repeat-containing gene 6A protein (Tnrc6a) from Mus musculus (Mouse).